A 111-amino-acid chain; its full sequence is MAQRVTYRRRLAYNTRSNKTRIIKTPGNNIRYLHIKKLGTIPRCGDTGVPLQGIPALRPREFARLSHNQKKVQRAYGGCLSANAVKDRIVRAFLIEEQKIVKQKLKQMSQK.

Tyrosine 76 carries the post-translational modification Phosphotyrosine.

Belongs to the eukaryotic ribosomal protein eL34 family. Component of the large ribosomal subunit (LSU). Mature yeast ribosomes consist of a small (40S) and a large (60S) subunit. The 40S small subunit contains 1 molecule of ribosomal RNA (18S rRNA) and at least 33 different proteins. The large 60S subunit contains 3 rRNA molecules (25S, 5.8S and 5S rRNA) and at least 46 different proteins.

The protein resides in the cytoplasm. It localises to the nucleus. It is found in the nucleolus. Component of the ribosome, a large ribonucleoprotein complex responsible for the synthesis of proteins in the cell. The small ribosomal subunit (SSU) binds messenger RNAs (mRNAs) and translates the encoded message by selecting cognate aminoacyl-transfer RNA (tRNA) molecules. The large subunit (LSU) contains the ribosomal catalytic site termed the peptidyl transferase center (PTC), which catalyzes the formation of peptide bonds, thereby polymerizing the amino acids delivered by tRNAs into a polypeptide chain. The nascent polypeptides leave the ribosome through a tunnel in the LSU and interact with protein factors that function in enzymatic processing, targeting, and the membrane insertion of nascent chains at the exit of the ribosomal tunnel. This is Large ribosomal subunit protein eL34B (rpl3402) from Schizosaccharomyces pombe (strain 972 / ATCC 24843) (Fission yeast).